The sequence spans 132 residues: Small ribosomal subunit protein uS8 (132 aa).

Belongs to the universal ribosomal protein uS8 family. Part of the 30S ribosomal subunit. Contacts proteins S5 and S12.

Its function is as follows. One of the primary rRNA binding proteins, it binds directly to 16S rRNA central domain where it helps coordinate assembly of the platform of the 30S subunit. The polypeptide is Small ribosomal subunit protein uS8 (Cereibacter sphaeroides (strain ATCC 17029 / ATH 2.4.9) (Rhodobacter sphaeroides)).